The sequence spans 919 residues: Periodic tryptophan protein 2 homolog (919 aa).

WD repeat units lie at residues 12–50, 53–93, 94–132, 142–181, and 186–225; these read GTVY…SNTL, ATKY…LHHF, HFKG…REFN, GPYD…NLIY, and GHKD…EGLR. Lys55 is modified (N6-acetyllysine). Residues 238–266 form a disordered region; that stretch reads QREKEEEEEDEEEGDRETTIRGKTTPAEQ. Positions 242-252 are enriched in acidic residues; sequence EEEEEDEEEGD. WD repeat units follow at residues 286 to 325, 328 to 368, 371 to 410, 413 to 452, 456 to 498, 499 to 538, 541 to 580, 603 to 642, and 700 to 740; these read GDFN…LIHS, ISDQ…YVLK, GHFN…CFVT, EHSS…NFRT, PRPT…DVLS, GHEG…RTKE, TLTS…QVGS, AKGK…LVKR, and KPEI…DPFE. The tract at residues 885–919 is disordered; it reads TLEPVDTEEDSDASDEDSLHLLRAAGEEEEEEMLI. Over residues 889-900 the composition is skewed to acidic residues; that stretch reads VDTEEDSDASDE. Thr891 is subject to Phosphothreonine. Ser895, Ser898, and Ser902 each carry phosphoserine.

The protein belongs to the WD repeat PWP2 family. In terms of assembly, part of the small subunit (SSU) processome, composed of more than 70 proteins and the RNA chaperone small nucleolar RNA (snoRNA) U3.

The protein localises to the nucleus. It localises to the nucleolus. Functionally, part of the small subunit (SSU) processome, first precursor of the small eukaryotic ribosomal subunit. During the assembly of the SSU processome in the nucleolus, many ribosome biogenesis factors, an RNA chaperone and ribosomal proteins associate with the nascent pre-rRNA and work in concert to generate RNA folding, modifications, rearrangements and cleavage as well as targeted degradation of pre-ribosomal RNA by the RNA exosome. This is Periodic tryptophan protein 2 homolog (Pwp2) from Mus musculus (Mouse).